Consider the following 455-residue polypeptide: Phosphoglucosamine mutase (455 aa).

The active-site Phosphoserine intermediate is the serine 103. Residues serine 103, aspartate 243, aspartate 245, and aspartate 247 each contribute to the Mg(2+) site. Phosphoserine is present on serine 103.

Belongs to the phosphohexose mutase family. The cofactor is Mg(2+). Activated by phosphorylation.

It catalyses the reaction alpha-D-glucosamine 1-phosphate = D-glucosamine 6-phosphate. In terms of biological role, catalyzes the conversion of glucosamine-6-phosphate to glucosamine-1-phosphate. The sequence is that of Phosphoglucosamine mutase from Halorhodospira halophila (strain DSM 244 / SL1) (Ectothiorhodospira halophila (strain DSM 244 / SL1)).